Here is a 293-residue protein sequence, read N- to C-terminus: MAITAQLVKELRQKTGAGMMDCKKALTETDGDIDKAIDLLREKGIAKAAKKADRIAAEGLTLIKTDGNTGVILEVNSETDFVAKNEGFQSLLNELADHLLAAKPATIEEAHASKMENGSTVEEHITSAIAKIGEKITLRRFSVITKEDNAAFGSYLHMGGRIGVLAVLNGTTDEELARDIAMHVAAVNPKYISRDQVSEEEANREREVLTQQALQEGKPENIVAKMVEGRLNKFFEEICLLDQAFVKNPDEKVKQVVAAKNASIQTYVRYEVGEGIEKRQDNFAEEVMSQVKK.

An involved in Mg(2+) ion dislocation from EF-Tu region spans residues 79–82; the sequence is TDFV.

Belongs to the EF-Ts family.

The protein localises to the cytoplasm. In terms of biological role, associates with the EF-Tu.GDP complex and induces the exchange of GDP to GTP. It remains bound to the aminoacyl-tRNA.EF-Tu.GTP complex up to the GTP hydrolysis stage on the ribosome. The polypeptide is Elongation factor Ts (Bacillus pumilus (strain SAFR-032)).